A 661-amino-acid polypeptide reads, in one-letter code: Cyclic di-GMP phosphodiesterase PdeR (661 aa).

The region spanning 109–179 is the PAS domain; sequence GLSFAEQVVS…RRNNRVFFRS (71 aa). In terms of domain architecture, GGDEF spans 265 to 397; the sequence is NKVGVVYLDL…GRGQFCVFTP (133 aa). Residues 406 to 658 form the EAL domain; that stretch reads YLWLDTNLRK…AFERWYKRYL (253 aa).

In terms of assembly, interacts with DgcM and MlrA.

It carries out the reaction 3',3'-c-di-GMP + H2O = 5'-phosphoguanylyl(3'-&gt;5')guanosine + H(+). Part of a signaling cascade that regulates curli biosynthesis. The cascade is composed of two cyclic-di-GMP (c-di-GMP) control modules, in which c-di-GMP controlled by the DgcE/PdeH pair (module I) regulates the activity of the DgcM/PdeR pair (module II), which in turn regulates activity of the transcription factor MlrA and expression of the master biofilm regulator csgD. PdeR acts as a trigger enzyme that connects modules I and II. It inhibits DgcM and MlrA by direct interaction. Inhibition is relieved when PdeR binds and degrades c-di-GMP generated by module I. The sequence is that of Cyclic di-GMP phosphodiesterase PdeR from Escherichia coli (strain K12).